The primary structure comprises 107 residues: UPF0473 protein llmg_0152 (107 aa).

It belongs to the UPF0473 family.

The protein is UPF0473 protein llmg_0152 of Lactococcus lactis subsp. cremoris (strain MG1363).